Reading from the N-terminus, the 351-residue chain is Dihydroorotate dehydrogenase (quinone) (351 aa).

Residues 61 to 65 (AGLDK) and threonine 85 contribute to the FMN site. Lysine 65 serves as a coordination point for substrate. 110-114 (NRMGF) is a binding site for substrate. 2 residues coordinate FMN: asparagine 139 and asparagine 172. Residue asparagine 172 participates in substrate binding. Serine 175 serves as the catalytic Nucleophile. Asparagine 177 contributes to the substrate binding site. FMN-binding residues include lysine 217 and threonine 245. 246–247 (NT) provides a ligand contact to substrate. FMN-binding positions include glycine 268, glycine 297, and 318 to 319 (YS).

It belongs to the dihydroorotate dehydrogenase family. Type 2 subfamily. As to quaternary structure, monomer. It depends on FMN as a cofactor.

Its subcellular location is the cell membrane. It carries out the reaction (S)-dihydroorotate + a quinone = orotate + a quinol. Its pathway is pyrimidine metabolism; UMP biosynthesis via de novo pathway; orotate from (S)-dihydroorotate (quinone route): step 1/1. Its function is as follows. Catalyzes the conversion of dihydroorotate to orotate with quinone as electron acceptor. The sequence is that of Dihydroorotate dehydrogenase (quinone) from Stenotrophomonas maltophilia (strain R551-3).